Here is a 162-residue protein sequence, read N- to C-terminus: Shikimate kinase (162 aa).

Residue 11–16 participates in ATP binding; that stretch reads GSGKSS. Mg(2+) is bound at residue Ser15. The substrate site is built by Asp33, Arg57, and Gly80. Residue Arg116 participates in ATP binding. Residue Arg132 coordinates substrate.

It belongs to the shikimate kinase family. In terms of assembly, monomer. Requires Mg(2+) as cofactor.

It is found in the cytoplasm. The catalysed reaction is shikimate + ATP = 3-phosphoshikimate + ADP + H(+). It functions in the pathway metabolic intermediate biosynthesis; chorismate biosynthesis; chorismate from D-erythrose 4-phosphate and phosphoenolpyruvate: step 5/7. In terms of biological role, catalyzes the specific phosphorylation of the 3-hydroxyl group of shikimic acid using ATP as a cosubstrate. This is Shikimate kinase from Helicobacter pylori (strain G27).